Reading from the N-terminus, the 427-residue chain is uncharacterized protein (427 aa).

This sequence belongs to the CAF1 family.

This is an uncharacterized protein from Schizosaccharomyces pombe (strain 972 / ATCC 24843) (Fission yeast).